Reading from the N-terminus, the 177-residue chain is Outer envelope pore protein 21, chloroplastic (177 aa).

At Met1 to Lys21 the chain is on the cytoplasmic side. Residues Leu22–Gln31 traverse the membrane as a beta stranded segment. The Chloroplast intermembrane portion of the chain corresponds to Val32 to Pro55. A beta stranded transmembrane segment spans residues Asn56–Val65. At Arg66–Asp81 the chain is on the cytoplasmic side. The beta stranded transmembrane segment at Lys82–Lys91 threads the bilayer. Residues Thr92–Asn97 lie on the Chloroplast intermembrane side of the membrane. The beta stranded transmembrane segment at Asp98–Gly107 threads the bilayer. The Cytoplasmic segment spans residues Gly108 to Ser120. A beta stranded membrane pass occupies residues Arg121 to Val130. Topologically, residues Phe131 to Gln137 are chloroplast intermembrane. A beta stranded membrane pass occupies residues Asp138 to Ala147. The Cytoplasmic portion of the chain corresponds to Phe148–Pro152. The chain crosses the membrane as a beta stranded span at residues Tyr153 to Thr162. Over Phe163–Lys168 the chain is Chloroplast intermembrane. The beta stranded transmembrane segment at Gly169 to Leu177 threads the bilayer.

The protein belongs to the plastid outer envelope porin OEP21 (TC 1.B.29) family. In terms of tissue distribution, present in roots, shoots and leaves.

It localises to the plastid. The protein localises to the etioplast membrane. It is found in the chloroplast outer membrane. Its function is as follows. Voltage-dependent rectifying anion channel that facilitates the translocation between chloroplast and cytoplasm of phosphorylated carbohydrates such as triosephosphate, 3-phosphoglycerate and inorganic phosphate (Pi) depending of ATP to triosephosphate ratio in the plastidial intermembrane space; in high triosephosphate/ATP conditions (e.g. photosynthesis), export of triosphosphate from chloroplast (outward rectifying channels), but in high ATP/triosephosphate conditions (e.g. dark phase), import of phosphosolutes (inward rectifying channels). This Pisum sativum (Garden pea) protein is Outer envelope pore protein 21, chloroplastic (OEP21).